Here is a 352-residue protein sequence, read N- to C-terminus: Dysbindin (352 aa).

The residue at position 11 (Ser11) is a Phosphoserine. Residues 92–180 adopt a coiled-coil conformation; that stretch reads TSLAELQEQL…AELDTEHAQK (89 aa). Residues 243–256 carry the Nuclear export signal motif; it reads LMDLSDQEALDVFL. The interval 267-352 is disordered; sequence SPGLEMESNP…SDQCDSTQDI (86 aa). Residues 274-285 show a composition bias toward polar residues; sequence SNPSQNEMNLQI. Positions 286-301 are enriched in low complexity; that stretch reads PNPSESASQPPASPSA. Phosphoserine is present on residues Ser340 and Ser343.

This sequence belongs to the dysbindin family. Interacts (via its coiled coil domain) with KXD1. Interacts with AP3B2, TRIM32, CMYA5, PI4K2 and RNF151. Interacts with the DNA-dependent protein kinase complex DNA-PK; the interaction phosphorylates DTNBP1 in vitro. Interacts directly in this complex with XRCC5 and XRCC6. Interacts with XPO1; the interaction exports DTNBP1 out of the nucleus. Component of the biogenesis of lysosome-related organelles complex 1 (BLOC-1) composed of at least BLOC1S1, BLOC1S2, BLOC1S3, BLOC1S4, BLOC1S5, BLOC1S6, DTNBP1/BLOC1S7 and SNAPIN/BLOC1S8. Interacts directly in the complex with BLOC1S5, BLOC1S6 and SNAPIN/BLOC1S8. The BLOC-1 complex associates with the AP-3 protein complex and membrane protein cargos. This BLOC-1 complex also associates with the BLOC-2 complex in endosomes. Binds to DTNA and DTNB but may not be a physiological binding partner. Interacts with AP3M1. Ubiquitinated by TRIM32. Ubiquitination leads to DTNBP1 degradation. As to expression, detected in hippocampus neurons (at protein level). Ubiquitously expressed. The highest expression is observed in testis, liver, kidney, brain, heart and lung. In the brain, found primarily in axon bundles and axon terminals, notably in the cerebellum and hippocampus. Expressed at lower levels in stomach, small intestine and skeletal muscle, where it is detected at the sarcolemma.

It localises to the cytoplasm. The protein localises to the cytoplasmic vesicle membrane. The protein resides in the cytoplasmic vesicle. Its subcellular location is the secretory vesicle. It is found in the synaptic vesicle membrane. It localises to the endosome membrane. The protein localises to the melanosome membrane. The protein resides in the nucleus. Its subcellular location is the postsynaptic density. It is found in the presynaptic cell membrane. It localises to the endoplasmic reticulum. Functionally, component of the BLOC-1 complex, a complex that is required for normal biogenesis of lysosome-related organelles (LRO), such as platelet dense granules and melanosomes. In concert with the AP-3 complex, the BLOC-1 complex is required to target membrane protein cargos into vesicles assembled at cell bodies for delivery into neurites and nerve terminals. The BLOC-1 complex, in association with SNARE proteins, is also proposed to be involved in neurite extension. Associates with the BLOC-2 complex to facilitate the transport of TYRP1 independent of AP-3 function. Plays a role in synaptic vesicle trafficking and in neurotransmitter release. Plays a role in the regulation of cell surface exposure of DRD2. May play a role in actin cytoskeleton reorganization and neurite outgrowth. May modulate MAPK8 phosphorylation. Appears to promote neuronal transmission and viability through regulating the expression of SNAP25 and SYN1, modulating PI3-kinase-Akt signaling and influencing glutamatergic release. Regulates the expression of SYN1 through binding to its promoter. Modulates prefrontal cortical activity via the dopamine/D2 pathway. This chain is Dysbindin (Dtnbp1), found in Rattus norvegicus (Rat).